We begin with the raw amino-acid sequence, 107 residues long: Nucleoid-associated protein HNE_0371 (107 aa).

Belongs to the YbaB/EbfC family. Homodimer.

The protein resides in the cytoplasm. It localises to the nucleoid. Functionally, binds to DNA and alters its conformation. May be involved in regulation of gene expression, nucleoid organization and DNA protection. The protein is Nucleoid-associated protein HNE_0371 of Hyphomonas neptunium (strain ATCC 15444).